Reading from the N-terminus, the 336-residue chain is DNA-directed RNA polymerase subunit alpha (336 aa).

Residues Met-1 to Asp-232 are alpha N-terminal domain (alpha-NTD). An alpha C-terminal domain (alpha-CTD) region spans residues Phe-248–Tyr-336.

The protein belongs to the RNA polymerase alpha chain family. As to quaternary structure, homodimer. The RNAP catalytic core consists of 2 alpha, 1 beta, 1 beta' and 1 omega subunit. When a sigma factor is associated with the core the holoenzyme is formed, which can initiate transcription.

It carries out the reaction RNA(n) + a ribonucleoside 5'-triphosphate = RNA(n+1) + diphosphate. Its function is as follows. DNA-dependent RNA polymerase catalyzes the transcription of DNA into RNA using the four ribonucleoside triphosphates as substrates. This chain is DNA-directed RNA polymerase subunit alpha, found in Rhizobium etli (strain CIAT 652).